The sequence spans 1792 residues: BTB/POZ domain-containing protein 8 (1792 aa).

BTB domains follow at residues 58-127 and 206-273; these read TDVT…NIKN and PDID…DIPD. Disordered regions lie at residues 528-554, 581-658, 670-692, 707-768, 788-815, 831-989, 1151-1283, and 1519-1607; these read DKGD…SDSG, SDGL…PRQV, TGQK…SGAR, KPLK…CDSP, SRPV…NNSV, AILK…KPHK, ERTN…SNDR, and SIDS…KSLD. 2 stretches are compositionally biased toward polar residues: residues 541-552 and 588-601; these read FSSSQQRKQVSD and GHSS…INKT. 2 stretches are compositionally biased toward basic and acidic residues: residues 602–625 and 640–650; these read LKQD…ELKT and SKTENGDKARL. Over residues 724 to 740 the composition is skewed to polar residues; the sequence is GPSSRSTDSSMEFSIST. Positions 744–758 are enriched in basic and acidic residues; that stretch reads DEPKENGSTEEEKPS. The segment covering 838-865 has biased composition (polar residues); it reads TSNGCTAAQQRTKSTPSNLTKTQGSQGE. The segment covering 866-877 has biased composition (low complexity); it reads SPNSVKSSVSSR. Composition is skewed to basic and acidic residues over residues 878–891 and 927–939; these read QSDE…HNTT and KKGE…DSKQ. The span at 947-956 shows a compositional bias: polar residues; it reads ISKTQPSSQR. The span at 969–987 shows a compositional bias: basic and acidic residues; sequence MFHDVRDNNNKDSVSEQKP. Composition is skewed to polar residues over residues 1151–1160 and 1195–1215; these read ERTNGTLNSA and SDVS…PKNM. Residues 1250–1259 are compositionally biased toward low complexity; sequence SDTGSATTSS. Residues 1566-1594 show a composition bias toward basic and acidic residues; it reads IQQRSKFLDSDVKSQERPCHLDLHQREPN. Residues 1597–1607 show a composition bias toward polar residues; the sequence is IPKNSSTKSLD.

As to quaternary structure, interacts (via N-terminus) with adapter protein complex AP-2 subunits alpha (AP2A1) and beta (AP2B1). As to expression, highly expressed in fetal brain. Weakly expressed in adult brain and prostate.

It localises to the cell projection. Its subcellular location is the axon. The protein resides in the presynapse. It is found in the cytoplasmic vesicle. The protein localises to the clathrin-coated vesicle. It localises to the nucleus. Involved in clathrin-mediated endocytosis at the synapse. Plays a role in neuronal development and in synaptic vesicle recycling in mature neurons, a process required for normal synaptic transmission. This chain is BTB/POZ domain-containing protein 8, found in Homo sapiens (Human).